The sequence spans 459 residues: Probable cysteine protease ATG4 (459 aa).

The span at 77-90 (LPTTPSTTTLPYPL) shows a compositional bias: low complexity. The interval 77–104 (LPTTPSTTTLPYPLKAVPTTPPESSSSS) is disordered. The active-site Nucleophile is the Cys178. Residues Asp359 and His361 contribute to the active site.

The protein belongs to the peptidase C54 family.

It is found in the cytoplasm. It localises to the nucleus. The protein resides in the preautophagosomal structure. It carries out the reaction [protein]-C-terminal L-amino acid-glycyl-phosphatidylethanolamide + H2O = [protein]-C-terminal L-amino acid-glycine + a 1,2-diacyl-sn-glycero-3-phosphoethanolamine. Functionally, cysteine protease that plays a key role in cytoplasm to vacuole transport (Cvt) and autophagy by mediating both proteolytic activation and delipidation of ATG8. Required for selective autophagic degradation of the nucleus (nucleophagy) as well as for mitophagy which contributes to regulate mitochondrial quantity and quality by eliminating the mitochondria to a basal level to fulfill cellular energy requirements and preventing excess ROS production. The protease activity is required for proteolytic activation of ATG8: cleaves the C-terminal amino acid of ATG8 to reveal a C-terminal glycine. ATG8 ubiquitin-like activity requires the exposure of the glycine at the C-terminus for its conjugation to phosphatidylethanolamine (PE) and its insertion to membranes, which is necessary for autophagy. The ATG8-PE conjugate mediates tethering between adjacent membranes and stimulates membrane hemifusion, leading to expansion of the autophagosomal membrane during autophagy. In addition to the protease activity, also catalyzes deconjugation of PE-conjugated forms of ATG8 during macroautophagy: ATG8 delipidation is required to release the protein from membranes, which facilitates multiple events during macroautophagy, and especially for efficient autophagosome biogenesis, the assembly of ATG9-containing tubulovesicular clusters into phagophores/autophagosomes, and for the disassembly of PAS-associated ATG components. ATG8 delipidation by ATG4 also recycles ATG8-PE generated on inappropriate membranes to maintain a reservoir of unlipidated ATG8 that is required for autophagosome formation at the PAS. In Cryphonectria parasitica (Chestnut blight fungus), this protein is Probable cysteine protease ATG4 (ATG4).